Here is a 118-residue protein sequence, read N- to C-terminus: Large ribosomal subunit protein uL22 (118 aa).

The protein belongs to the universal ribosomal protein uL22 family. In terms of assembly, part of the 50S ribosomal subunit.

Functionally, this protein binds specifically to 23S rRNA; its binding is stimulated by other ribosomal proteins, e.g. L4, L17, and L20. It is important during the early stages of 50S assembly. It makes multiple contacts with different domains of the 23S rRNA in the assembled 50S subunit and ribosome. The globular domain of the protein is located near the polypeptide exit tunnel on the outside of the subunit, while an extended beta-hairpin is found that lines the wall of the exit tunnel in the center of the 70S ribosome. The chain is Large ribosomal subunit protein uL22 from Leuconostoc citreum (strain KM20).